Here is a 347-residue protein sequence, read N- to C-terminus: MSSTLSDVFRSHPIHIPLSNPPDFKSLPDSYTWTPKDDLLFSASASDETLPLIDLSDIHVATLVGHACTTWGAFQITNHGVPSRLLDDIEFLTGSLFRLPVQRKLKAARSENGVSGYGVARIASFFNKKMWSEGFTVIGSPLHDFRKLWPSHHLKYCEIIEEYEEHMQKLAAKLMWFALGSLGVEEKDIQWAGPNSDFQGTQAVIQLNHYPKCPEPDRAMGLAAHTDSTLMTILYQNNTAGLQVFRDDVGWVTAPPVPGSLVVNVGDLLHILTNGIFPSVLHRARVNHVRSRFSMAYLWGPPSDIMISPLPKLVDPLQSPLYPSLTWKQYLATKATHFNQSLSIIRN.

The Fe2OG dioxygenase domain maps to 197–301; that stretch reads DFQGTQAVIQ…RFSMAYLWGP (105 aa). H225, D227, and H282 together coordinate Fe cation. R292 is a catalytic residue. R292 is a binding site for 2-oxoglutarate.

This sequence belongs to the iron/ascorbate-dependent oxidoreductase family. GA3OX subfamily. L-ascorbate is required as a cofactor. The cofactor is Fe(2+). In terms of tissue distribution, highly expressed in seedlings but also expressed in roots, leaves, stems, flowers, siliques and seeds. Detected predominantly in the hypocotyl and roots of young seedlings and in the petioles and vasculature of leaves. Not expressed in the shoot apical meristem, but found in the elongation zone, the quiescent center cells and the columella cells of the root tips. Found in the cortex and the endodermis of the embryo axis in germinating seeds.

It carries out the reaction gibberellin A20 + 2-oxoglutarate + O2 = gibberellin A1 + succinate + CO2. Its pathway is plant hormone biosynthesis; gibberellin biosynthesis. Converts the inactive gibberellin (GA) precursors GA9 and GA20 in the bioactives gibberellins GA4 and GA1. Involved in the production of bioactive GA for vegetative growth and development. This Arabidopsis thaliana (Mouse-ear cress) protein is Gibberellin 3-beta-dioxygenase 2.